The chain runs to 205 residues: Holliday junction branch migration complex subunit RuvA (205 aa).

The tract at residues 1-63 (MIGMLRGHVE…QDAITLFGFG (63 aa)) is domain I. Positions 64 to 142 (TLASKRMFLQ…LSQIEGSSAT (79 aa)) are domain II. The interval 143–145 (AST) is flexible linker. The interval 146–205 (PEDTGAEQVVEGLMSLGWHQQDAAHAVQTVCADNQIETPLNAKDVPRVLKLALTSLDRGR) is domain III.

It belongs to the RuvA family. Homotetramer. Forms an RuvA(8)-RuvB(12)-Holliday junction (HJ) complex. HJ DNA is sandwiched between 2 RuvA tetramers; dsDNA enters through RuvA and exits via RuvB. An RuvB hexamer assembles on each DNA strand where it exits the tetramer. Each RuvB hexamer is contacted by two RuvA subunits (via domain III) on 2 adjacent RuvB subunits; this complex drives branch migration. In the full resolvosome a probable DNA-RuvA(4)-RuvB(12)-RuvC(2) complex forms which resolves the HJ.

It is found in the cytoplasm. The RuvA-RuvB-RuvC complex processes Holliday junction (HJ) DNA during genetic recombination and DNA repair, while the RuvA-RuvB complex plays an important role in the rescue of blocked DNA replication forks via replication fork reversal (RFR). RuvA specifically binds to HJ cruciform DNA, conferring on it an open structure. The RuvB hexamer acts as an ATP-dependent pump, pulling dsDNA into and through the RuvAB complex. HJ branch migration allows RuvC to scan DNA until it finds its consensus sequence, where it cleaves and resolves the cruciform DNA. This Bifidobacterium adolescentis (strain ATCC 15703 / DSM 20083 / NCTC 11814 / E194a) protein is Holliday junction branch migration complex subunit RuvA.